The chain runs to 804 residues: uncharacterized protein (804 aa).

This is an uncharacterized protein from Methanothermobacter marburgensis (strain ATCC BAA-927 / DSM 2133 / JCM 14651 / NBRC 100331 / OCM 82 / Marburg) (Methanobacterium thermoautotrophicum).